Consider the following 338-residue polypeptide: tRNA pseudouridine synthase D (338 aa).

Asp-79 functions as the Nucleophile in the catalytic mechanism. In terms of domain architecture, TRUD spans 154-303; the sequence is GVPNYFGEQR…EEAWRANILY (150 aa).

Belongs to the pseudouridine synthase TruD family.

It carries out the reaction uridine(13) in tRNA = pseudouridine(13) in tRNA. Its function is as follows. Responsible for synthesis of pseudouridine from uracil-13 in transfer RNAs. The protein is tRNA pseudouridine synthase D of Legionella pneumophila (strain Lens).